The sequence spans 317 residues: NADH-ubiquinone oxidoreductase chain 1 (317 aa).

The next 9 helical transmembrane spans lie at 3 to 23 (YIEL…LTVA), 37 to 57 (PNAV…KLLL), 69 to 89 (LILF…WSVI), 103 to 123 (GFIL…LAGW), 141 to 161 (LISY…IGGT), 173 to 193 (AIWY…GCVA), 207 to 227 (SELV…LFFL), 247 to 267 (GGTG…YIWV), and 282 to 302 (LCWM…PAYL).

Belongs to the complex I subunit 1 family.

It is found in the mitochondrion inner membrane. It catalyses the reaction a ubiquinone + NADH + 5 H(+)(in) = a ubiquinol + NAD(+) + 4 H(+)(out). In terms of biological role, core subunit of the mitochondrial membrane respiratory chain NADH dehydrogenase (Complex I) that is believed to belong to the minimal assembly required for catalysis. Complex I functions in the transfer of electrons from NADH to the respiratory chain. The immediate electron acceptor for the enzyme is believed to be ubiquinone. The polypeptide is NADH-ubiquinone oxidoreductase chain 1 (NAD1) (Candida albicans (strain SC5314 / ATCC MYA-2876) (Yeast)).